The chain runs to 431 residues: Glutamate-1-semialdehyde 2,1-aminomutase (431 aa).

The residue at position 267 (Lys267) is an N6-(pyridoxal phosphate)lysine.

The protein belongs to the class-III pyridoxal-phosphate-dependent aminotransferase family. HemL subfamily. Homodimer. It depends on pyridoxal 5'-phosphate as a cofactor.

It is found in the cytoplasm. The catalysed reaction is (S)-4-amino-5-oxopentanoate = 5-aminolevulinate. Its pathway is porphyrin-containing compound metabolism; protoporphyrin-IX biosynthesis; 5-aminolevulinate from L-glutamyl-tRNA(Glu): step 2/2. The chain is Glutamate-1-semialdehyde 2,1-aminomutase from Myxococcus xanthus (strain DK1622).